A 459-amino-acid polypeptide reads, in one-letter code: Uterine milk protein (459 aa).

The signal sequence occupies residues 1–25 (MSHGRMNLALSLVFILCGLFNSIFC). Asn-268 carries N-linked (GlcNAc...) asparagine glycosylation.

This sequence belongs to the serpin family. UTMP subfamily.

This chain is Uterine milk protein, found in Bos taurus (Bovine).